The chain runs to 1178 residues: Zinc finger CCHC domain-containing protein 2 (1178 aa).

4 disordered regions span residues 1–90, 207–249, 557–683, and 936–986; these read MLRM…GPSA, AARG…RVGG, VTSA…SVNQ, and LSTA…SDST. The span at 43-67 shows a compositional bias: pro residues; it reads PPPPPPPPAGPSRGPLPPPPPPRGL. The span at 75–88 shows a compositional bias: gly residues; that stretch reads AAAGAGMPGGGGGP. Basic and acidic residues predominate over residues 208–219; that stretch reads ARGEGSRGGAED. Residues 220–229 show a composition bias toward acidic residues; that stretch reads ERGEDGDGEQ. Residue S236 is modified to Phosphoserine. Residues 580-594 are compositionally biased toward basic and acidic residues; the sequence is PQTEKEKIKKTDNRL. The span at 595–607 shows a compositional bias: polar residues; that stretch reads NSRINGIRLSTPQ. Low complexity predominate over residues 632–641; the sequence is SSESYSSPSS. Over residues 642-661 the composition is skewed to basic and acidic residues; sequence PRHDGRESFESEEEKDRDTD. Over residues 665–683 the composition is skewed to polar residues; the sequence is EDSGNPSTTRFTGYGSVNQ. Residues 937–948 show a composition bias toward low complexity; it reads STAATSPQPASA. Over residues 959 to 973 the composition is skewed to pro residues; that stretch reads PAVPTHTPGPAPSPS. Residues 974-986 are compositionally biased toward polar residues; the sequence is PALTHSTAQSDST. The CCHC-type zinc finger occupies 1131–1148; that stretch reads VSCYNCGVSGHYAQDCKQ.

This chain is Zinc finger CCHC domain-containing protein 2, found in Homo sapiens (Human).